The following is a 162-amino-acid chain: 2-C-methyl-D-erythritol 2,4-cyclodiphosphate synthase (162 aa).

2 residues coordinate a divalent metal cation: aspartate 12 and histidine 14. Residues 12–14 (DVH) and 38–39 (HS) contribute to the 4-CDP-2-C-methyl-D-erythritol 2-phosphate site. Histidine 46 contacts a divalent metal cation. Residues 60–62 (DIG), 65–69 (FPDTD), and arginine 146 contribute to the 4-CDP-2-C-methyl-D-erythritol 2-phosphate site.

This sequence belongs to the IspF family. In terms of assembly, homotrimer. Requires a divalent metal cation as cofactor.

The enzyme catalyses 4-CDP-2-C-methyl-D-erythritol 2-phosphate = 2-C-methyl-D-erythritol 2,4-cyclic diphosphate + CMP. It functions in the pathway isoprenoid biosynthesis; isopentenyl diphosphate biosynthesis via DXP pathway; isopentenyl diphosphate from 1-deoxy-D-xylulose 5-phosphate: step 4/6. In terms of biological role, involved in the biosynthesis of isopentenyl diphosphate (IPP) and dimethylallyl diphosphate (DMAPP), two major building blocks of isoprenoid compounds. Catalyzes the conversion of 4-diphosphocytidyl-2-C-methyl-D-erythritol 2-phosphate (CDP-ME2P) to 2-C-methyl-D-erythritol 2,4-cyclodiphosphate (ME-CPP) with a corresponding release of cytidine 5-monophosphate (CMP). The chain is 2-C-methyl-D-erythritol 2,4-cyclodiphosphate synthase from Bordetella bronchiseptica (strain ATCC BAA-588 / NCTC 13252 / RB50) (Alcaligenes bronchisepticus).